Here is a 318-residue protein sequence, read N- to C-terminus: MRHFLDFEKPVAELEAKIEELRRMTDPGELNIAEEVTLLSDKAERQLRTLYGRLSPWQKTQVARHPERPKARDVIAGLITEFTPLAGDRGFGEDAAIVAGPGRFKGEPVMVIAIEKGWDLESRLKHNFGSPRPEGYRKARRLIEMAGRFGLPVLSFVDTSGAYPGVDAEARGQAEAIARGIDACLAAPVPFIATIIGEGGSGGAIAIAAADTVLMFEHAIYSVISPEGCAAILWEDRANAAQAAEAMKITAQDLKRLGIIDRIVPEPLGGAHRDPQAAITALGAAIAETLPGLAALAPEALRAKRREKFLAIGQTLPV.

In terms of domain architecture, CoA carboxyltransferase C-terminal spans 39 to 292; sequence LSDKAERQLR…GAAIAETLPG (254 aa).

Belongs to the AccA family. Acetyl-CoA carboxylase is a heterohexamer composed of biotin carboxyl carrier protein (AccB), biotin carboxylase (AccC) and two subunits each of ACCase subunit alpha (AccA) and ACCase subunit beta (AccD).

The protein resides in the cytoplasm. It catalyses the reaction N(6)-carboxybiotinyl-L-lysyl-[protein] + acetyl-CoA = N(6)-biotinyl-L-lysyl-[protein] + malonyl-CoA. The protein operates within lipid metabolism; malonyl-CoA biosynthesis; malonyl-CoA from acetyl-CoA: step 1/1. Component of the acetyl coenzyme A carboxylase (ACC) complex. First, biotin carboxylase catalyzes the carboxylation of biotin on its carrier protein (BCCP) and then the CO(2) group is transferred by the carboxyltransferase to acetyl-CoA to form malonyl-CoA. This is Acetyl-coenzyme A carboxylase carboxyl transferase subunit alpha from Acidiphilium cryptum (strain JF-5).